The primary structure comprises 136 residues: Nucleoside diphosphate kinase (136 aa).

Positions 10, 58, 86, 92, 104, and 114 each coordinate ATP. The active-site Pros-phosphohistidine intermediate is the His117.

It belongs to the NDK family. As to quaternary structure, homotetramer. The cofactor is Mg(2+).

The protein localises to the cytoplasm. The catalysed reaction is a 2'-deoxyribonucleoside 5'-diphosphate + ATP = a 2'-deoxyribonucleoside 5'-triphosphate + ADP. It catalyses the reaction a ribonucleoside 5'-diphosphate + ATP = a ribonucleoside 5'-triphosphate + ADP. Its function is as follows. Major role in the synthesis of nucleoside triphosphates other than ATP. The ATP gamma phosphate is transferred to the NDP beta phosphate via a ping-pong mechanism, using a phosphorylated active-site intermediate. This Corynebacterium jeikeium (strain K411) protein is Nucleoside diphosphate kinase.